The sequence spans 2528 residues: Highly reducing polyketide synthase pspA (2528 aa).

The disordered stretch occupies residues 1 to 53 (MLAQDVEFVDLPPPEATAGAATTDNETSSFNSNPVPTPSEASSIGPPHQLPVP). Over residues 24 to 42 (DNETSSFNSNPVPTPSEAS) the composition is skewed to polar residues. A Ketosynthase family 3 (KS3) domain is found at 63 to 483 (VEPMAICGMA…GSNAHVLLGS (421 aa)). Catalysis depends on for beta-ketoacyl synthase activity residues C235, H371, and H406. The interval 590–909 (TFTGQGAQWA…HKDLLKAVGE (320 aa)) is malonyl-CoA:ACP transacylase (MAT) domain. Residues 961 to 1089 (HDILGSRVLE…GQVCAGSDRE (129 aa)) form an N-terminal hotdog fold region. The interval 961 to 1230 (HDILGSRVLE…VSNGHVTIDI (270 aa)) is dehydratase (DH) domain. In terms of domain architecture, PKS/mFAS DH spans 961–1244 (HDILGSRVLE…MSAIGDAADA (284 aa)). Residue H993 is the Proton acceptor; for dehydratase activity of the active site. Positions 1099–1244 (PRQLSRRGWY…MSAIGDAADA (146 aa)) are C-terminal hotdog fold. The Proton donor; for dehydratase activity role is filled by D1160. Positions 1409–1587 (VFLELLAHRK…GFSGINLVSH (179 aa)) are methyltransferase (CMet) domain. The tract at residues 1803–2119 (GLVDTLCWKS…RGQHIGKIVI (317 aa)) is enoyl reductase (ER) (ER) domain. Residues 2143 to 2322 (RAYLFVGGLG…ASTVNIGVIQ (180 aa)) are ketoreductase (KR) domain. One can recognise a Carrier domain in the interval 2447–2525 (ETAELLAGEI…DLGVLAQKKL (79 aa)). An O-(pantetheine 4'-phosphoryl)serine modification is found at S2485.

It catalyses the reaction 9 malonyl-CoA + acetyl-CoA + S-adenosyl-L-methionine + 13 NADPH + 20 H(+) = soppiline A + S-adenosyl-L-homocysteine + 9 CO2 + 13 NADP(+) + 10 CoA + 7 H2O. It functions in the pathway secondary metabolite biosynthesis. Its function is as follows. Highly reducing polyketide synthase; part of the gene cluster that mediates the biosynthesis of the alkylresorcinols called soppilines. The biosynthesis starts with the HR-PKS pspA-catalyzed carbon chain assembly through nine chain elongation cycles, using acetyl CoA and malonyl CoA as a starter and extender units, respectively, to produce the polyketide soppiline A. In the first round, the KR, DH, and CMeT domains work to produce 2-methyl-2-butenyl thioester. In rounds 2 to 5, the KR, DH, and ER domains fully catalyze the reduction of the elongated beta-ketothioester, resulting in the insertion of eight methylene units. The unusual Z,E,Z-triene motif is likely constructed during rounds 6 to 8. Typically, the DH domain introduces a double bond at an alpha,beta-position of an elongated polyketide chain, with the dehydration of a beta-hydroxy group. The last extension cycle would be carried out with L-oriented beta-ketoreduction by the KR domain to produce beta-hydroxy carboxylic acid soppiline A. The type III PKS pspB intercepts the elongated polyketide chain at round 8 from the HR-PKS pspA, followed by a tri-keto extension and decarboxylative aldol cyclization to produce 1,3,5-trisubstituted alkylresorcinol soppiline B. Subsequently, the cytochrome P450 monooxygenase pspC catalyzes three-step oxidations at the C-4 methyl group to carboxylic acid to yield soppiline C. In Penicillium soppii, this protein is Highly reducing polyketide synthase pspA.